A 430-amino-acid chain; its full sequence is Glutamate-1-semialdehyde 2,1-aminomutase (430 aa).

K270 is subject to N6-(pyridoxal phosphate)lysine.

It belongs to the class-III pyridoxal-phosphate-dependent aminotransferase family. HemL subfamily. In terms of assembly, homodimer. Pyridoxal 5'-phosphate serves as cofactor.

The protein localises to the cytoplasm. The catalysed reaction is (S)-4-amino-5-oxopentanoate = 5-aminolevulinate. It functions in the pathway porphyrin-containing compound metabolism; protoporphyrin-IX biosynthesis; 5-aminolevulinate from L-glutamyl-tRNA(Glu): step 2/2. This is Glutamate-1-semialdehyde 2,1-aminomutase from Cupriavidus metallidurans (strain ATCC 43123 / DSM 2839 / NBRC 102507 / CH34) (Ralstonia metallidurans).